The chain runs to 95 residues: Aspartyl/glutamyl-tRNA(Asn/Gln) amidotransferase subunit C (95 aa).

Belongs to the GatC family. In terms of assembly, heterotrimer of A, B and C subunits.

It catalyses the reaction L-glutamyl-tRNA(Gln) + L-glutamine + ATP + H2O = L-glutaminyl-tRNA(Gln) + L-glutamate + ADP + phosphate + H(+). The enzyme catalyses L-aspartyl-tRNA(Asn) + L-glutamine + ATP + H2O = L-asparaginyl-tRNA(Asn) + L-glutamate + ADP + phosphate + 2 H(+). In terms of biological role, allows the formation of correctly charged Asn-tRNA(Asn) or Gln-tRNA(Gln) through the transamidation of misacylated Asp-tRNA(Asn) or Glu-tRNA(Gln) in organisms which lack either or both of asparaginyl-tRNA or glutaminyl-tRNA synthetases. The reaction takes place in the presence of glutamine and ATP through an activated phospho-Asp-tRNA(Asn) or phospho-Glu-tRNA(Gln). The polypeptide is Aspartyl/glutamyl-tRNA(Asn/Gln) amidotransferase subunit C (Methylorubrum populi (strain ATCC BAA-705 / NCIMB 13946 / BJ001) (Methylobacterium populi)).